The following is a 164-amino-acid chain: Lipoprotein signal peptidase (164 aa).

3 helical membrane passes run 12 to 32 (WLWL…LILQ), 70 to 90 (WFFA…MYRS), and 102 to 122 (ALII…GFVV). Active-site residues include aspartate 123 and aspartate 141. A helical membrane pass occupies residues 137 to 157 (FNLADTAICVGAALIVLEGFL).

The protein belongs to the peptidase A8 family.

The protein resides in the cell inner membrane. The catalysed reaction is Release of signal peptides from bacterial membrane prolipoproteins. Hydrolyzes -Xaa-Yaa-Zaa-|-(S,diacylglyceryl)Cys-, in which Xaa is hydrophobic (preferably Leu), and Yaa (Ala or Ser) and Zaa (Gly or Ala) have small, neutral side chains.. It participates in protein modification; lipoprotein biosynthesis (signal peptide cleavage). Its function is as follows. This protein specifically catalyzes the removal of signal peptides from prolipoproteins. In Shigella sonnei (strain Ss046), this protein is Lipoprotein signal peptidase.